We begin with the raw amino-acid sequence, 268 residues long: GTP cyclohydrolase FolE2 (268 aa).

Belongs to the GTP cyclohydrolase IV family.

The catalysed reaction is GTP + H2O = 7,8-dihydroneopterin 3'-triphosphate + formate + H(+). It participates in cofactor biosynthesis; 7,8-dihydroneopterin triphosphate biosynthesis; 7,8-dihydroneopterin triphosphate from GTP: step 1/1. In terms of biological role, converts GTP to 7,8-dihydroneopterin triphosphate. The sequence is that of GTP cyclohydrolase FolE2 from Paraburkholderia phymatum (strain DSM 17167 / CIP 108236 / LMG 21445 / STM815) (Burkholderia phymatum).